Reading from the N-terminus, the 403-residue chain is MSETECGRFSTISRETISNVERQLSQPPSVWLNLTGARIIENEGQFDKDIALPNNKSHVTHIAVDIGGSLAKVMYYVCESSSPSSSSSSISEAENYTGGRLSFMIFETAKIEDCIQFMANLIDNHVKNCNKKKITLIATGGGAYKFYDRMSKQLDIKVIREDEMECLIMGLNYFVSCIPREVFVLDLDTCELTFQNHLNCYHYPHMLVNIGSGVSILKVTGPSQFERIGGSSLGGGTLWGLLSLLTPANSFDEMLELSKGGDNTSVDMLVGDIYGKDIGYERFGLKSTTIASSFGKVFRERKPLEEFAPQDISRSLLLAISNNIGQIAYLHAQKHNVQNIYFGGSFIRNHVQTMHTLTYAIQYWSNHTMNAYFLRHEGYLGVFGAFMKYATSQPSNVPVPSIS.

Phosphoserine is present on residues S80, S82, and S84.

This sequence belongs to the type II pantothenate kinase family.

It localises to the cytoplasm. It is found in the nucleus. The catalysed reaction is (R)-pantothenate + ATP = (R)-4'-phosphopantothenate + ADP + H(+). Its pathway is cofactor biosynthesis; coenzyme A biosynthesis; CoA from (R)-pantothenate: step 1/5. With respect to regulation, regulated by feedback inhibition by malonyl-CoA. Its function is as follows. Plays a role in the physiological regulation of the intracellular CoA concentration. The sequence is that of Pantothenate kinase from Schizosaccharomyces pombe (strain 972 / ATCC 24843) (Fission yeast).